Consider the following 448-residue polypeptide: Methylenetetrahydrofolate--tRNA-(uracil-5-)-methyltransferase TrmFO (448 aa).

Position 13–18 (13–18) interacts with FAD; that stretch reads GAGLAG.

The protein belongs to the MnmG family. TrmFO subfamily. The cofactor is FAD.

It is found in the cytoplasm. It carries out the reaction uridine(54) in tRNA + (6R)-5,10-methylene-5,6,7,8-tetrahydrofolate + NADH + H(+) = 5-methyluridine(54) in tRNA + (6S)-5,6,7,8-tetrahydrofolate + NAD(+). It catalyses the reaction uridine(54) in tRNA + (6R)-5,10-methylene-5,6,7,8-tetrahydrofolate + NADPH + H(+) = 5-methyluridine(54) in tRNA + (6S)-5,6,7,8-tetrahydrofolate + NADP(+). Its function is as follows. Catalyzes the folate-dependent formation of 5-methyl-uridine at position 54 (M-5-U54) in all tRNAs. The polypeptide is Methylenetetrahydrofolate--tRNA-(uracil-5-)-methyltransferase TrmFO (Streptococcus pyogenes serotype M28 (strain MGAS6180)).